The following is a 43-amino-acid chain: Neurotrophic factor BDNF (43 aa).

Belongs to the NGF-beta family.

The protein resides in the secreted. Functionally, promotes the survival of neuronal populations that are all located either in the central nervous system or directly connected to it. The polypeptide is Neurotrophic factor BDNF (bdnf) (Raja clavata (Thornback ray)).